The following is a 347-amino-acid chain: Methylthioribose-1-phosphate isomerase (347 aa).

Substrate-binding positions include 47 to 49, Arg-90, and Gln-199; that span reads RGA. The Proton donor role is filled by Asp-240. 250 to 251 lines the substrate pocket; it reads NK.

This sequence belongs to the eIF-2B alpha/beta/delta subunits family. MtnA subfamily.

The catalysed reaction is 5-(methylsulfanyl)-alpha-D-ribose 1-phosphate = 5-(methylsulfanyl)-D-ribulose 1-phosphate. Its pathway is amino-acid biosynthesis; L-methionine biosynthesis via salvage pathway; L-methionine from S-methyl-5-thio-alpha-D-ribose 1-phosphate: step 1/6. In terms of biological role, catalyzes the interconversion of methylthioribose-1-phosphate (MTR-1-P) into methylthioribulose-1-phosphate (MTRu-1-P). In Natranaerobius thermophilus (strain ATCC BAA-1301 / DSM 18059 / JW/NM-WN-LF), this protein is Methylthioribose-1-phosphate isomerase.